The chain runs to 459 residues: Argininosuccinate lyase (459 aa).

It belongs to the lyase 1 family. Argininosuccinate lyase subfamily.

It localises to the cytoplasm. The enzyme catalyses 2-(N(omega)-L-arginino)succinate = fumarate + L-arginine. It functions in the pathway amino-acid biosynthesis; L-arginine biosynthesis; L-arginine from L-ornithine and carbamoyl phosphate: step 3/3. In Staphylococcus aureus (strain MRSA252), this protein is Argininosuccinate lyase.